Consider the following 161-residue polypeptide: Allophycocyanin beta chain (161 aa).

Position 71 is an N4-methylasparagine (asparagine 71). (2R,3E)-phycocyanobilin is bound at residue cysteine 81.

The protein belongs to the phycobiliprotein family. As to quaternary structure, heterodimer of an alpha and a beta chain. In terms of processing, contains one covalently linked phycocyanobilin chromophore.

Its subcellular location is the cellular thylakoid membrane. Its function is as follows. Light-harvesting photosynthetic bile pigment-protein from the phycobiliprotein complex. Allophycocyanin has a maximum absorption at approximately 650 nanometers. This chain is Allophycocyanin beta chain (apcB), found in Mastigocladus laminosus (Fischerella sp.).